We begin with the raw amino-acid sequence, 308 residues long: Ribosomal RNA small subunit methyltransferase H (308 aa).

Residues G35–H37, D55, F79, D100, and Q107 each bind S-adenosyl-L-methionine.

The protein belongs to the methyltransferase superfamily. RsmH family.

It is found in the cytoplasm. It carries out the reaction cytidine(1402) in 16S rRNA + S-adenosyl-L-methionine = N(4)-methylcytidine(1402) in 16S rRNA + S-adenosyl-L-homocysteine + H(+). Functionally, specifically methylates the N4 position of cytidine in position 1402 (C1402) of 16S rRNA. This chain is Ribosomal RNA small subunit methyltransferase H, found in Dechloromonas aromatica (strain RCB).